A 408-amino-acid chain; its full sequence is MKCLCFIVLLAIVIAQSYVGVEAAPSDGFVSRNGVQFILNGKPFYANGFNAYWLAYEATDPATRFKITNVFQNATSLGLTIARTWGFRNGAIYRALQTAPGSYDEQTFQGLDFGIAEAKRVGIKLIIPLVNNWDDYGGKKQYVDWARSKGEMVSSNDDFYRNPVIKEFYKNHVKTMLNRVNTFTKVAYKDEPASMAWQLMNEPRCGVDRSGKTLMAWINEMALFVKSVDPNHLLSTGHEGFYGDSSPERKNSLNPVSANTVGADFIANHNIDAIDFASMHCGSDLWFQRLDQNSRLAFIKRWLEGHIEDAQNNLKKPVILAEFGLGSDTPRYTLANRDDVFTTTYDIIYISTQKGGSAAGALFWEVISEGVSNFAGPSSIILSDKSSTVNIISEQRRKMGLLGGTKGK.

Residues 1–23 form the signal peptide; that stretch reads MKCLCFIVLLAIVIAQSYVGVEA. Residue Asn73 is glycosylated (N-linked (GlcNAc...) asparagine). Trp85 and Asn201 together coordinate substrate. Residue Glu202 is the Proton donor of the active site. The active-site Nucleophile is the Glu322. Trp364 contacts substrate.

This sequence belongs to the glycosyl hydrolase 5 (cellulase A) family.

It localises to the secreted. It catalyses the reaction Random hydrolysis of (1-&gt;4)-beta-D-mannosidic linkages in mannans, galactomannans and glucomannans.. The sequence is that of Putative mannan endo-1,4-beta-mannosidase P (MANP) from Arabidopsis thaliana (Mouse-ear cress).